The following is a 197-amino-acid chain: Cytochrome c-L (197 aa).

An N-terminal signal peptide occupies residues 1-25 (MMNRVKIGTALLGLTLAGIALPALA). Positions 90, 93, and 94 each coordinate heme c.

Post-translationally, binds 1 heme c group covalently per subunit.

It is found in the periplasm. Electron acceptor for MDH. Acts in methanol oxidation. The protein is Cytochrome c-L (moxG) of Methylorubrum extorquens (strain ATCC 14718 / DSM 1338 / JCM 2805 / NCIMB 9133 / AM1) (Methylobacterium extorquens).